Reading from the N-terminus, the 250-residue chain is Indole-3-glycerol phosphate synthase (250 aa).

Belongs to the TrpC family.

The catalysed reaction is 1-(2-carboxyphenylamino)-1-deoxy-D-ribulose 5-phosphate + H(+) = (1S,2R)-1-C-(indol-3-yl)glycerol 3-phosphate + CO2 + H2O. The protein operates within amino-acid biosynthesis; L-tryptophan biosynthesis; L-tryptophan from chorismate: step 4/5. This is Indole-3-glycerol phosphate synthase from Bacillus pumilus (strain SAFR-032).